We begin with the raw amino-acid sequence, 817 residues long: Nuclear hormone receptor family member nhr-48 (817 aa).

A disordered region spans residues 49–91 (YNDDKDDPFYEDEGSGGGTSGGGKKSSRKRANTTSSSGGNEKE). A compositionally biased stretch (acidic residues) spans 52-62 (DKDDPFYEDEG). The span at 63–72 (SGGGTSGGGK) shows a compositional bias: gly residues. The segment at residues 97 to 172 (NKVCRVCGDK…VGMKKEWIMS (76 aa)) is a DNA-binding region (nuclear receptor). NR C4-type zinc fingers lie at residues 100 to 120 (CRVC…CESC) and 136 to 155 (CPFN…CQRC). Acidic residues predominate over residues 202–212 (ACMEDESENSY). Disordered regions lie at residues 202–221 (ACME…PSHQ) and 258–284 (MNFY…SSQL). A compositionally biased stretch (polar residues) spans 273-284 (LPSNSCASSSQL).

It belongs to the nuclear hormone receptor family.

It localises to the nucleus. Functionally, orphan nuclear receptor. This Caenorhabditis elegans protein is Nuclear hormone receptor family member nhr-48 (nhr-48).